Reading from the N-terminus, the 269-residue chain is Pertussis toxin subunit 1 homolog (269 aa).

An N-terminal signal peptide occupies residues 1–34 (MRCTRAIRQTARTGWLTWLAILAVTAPVTSPAWA).

The protein belongs to the bacterial exotoxin subunit A family.

The chain is Pertussis toxin subunit 1 homolog (ptxA) from Bordetella bronchiseptica (strain ATCC BAA-588 / NCTC 13252 / RB50) (Alcaligenes bronchisepticus).